The primary structure comprises 218 residues: MAYPGKKSKSYETPKHPWQEARMATEVQLVKAYGLRNKKEVWKAASMLRMYRSEARKLLAHVASGQEGGLEGHYRTQSEEILSKLIRYGIIKSDANIDDILSLKTENILERRLQTQVLRLGLARTVIQARQFITHGHIAINGRKATIPGMLVSKEDEMHIGYYGNSPLKNESHPERPVQVASFLADSGTTLKAAAEAKQAREKPPERGGGRRKRGGRR.

The region spanning Arg111 to Glu175 is the S4 RNA-binding domain. Residues Lys192–Arg218 form a disordered region. The span at Lys198–Gly209 shows a compositional bias: basic and acidic residues.

This sequence belongs to the universal ribosomal protein uS4 family. As to quaternary structure, part of the 30S ribosomal subunit. Contacts protein S5. The interaction surface between S4 and S5 is involved in control of translational fidelity.

In terms of biological role, one of the primary rRNA binding proteins, it binds directly to 16S rRNA where it nucleates assembly of the body of the 30S subunit. Its function is as follows. With S5 and S12 plays an important role in translational accuracy. The polypeptide is Small ribosomal subunit protein uS4 (Methanosarcina acetivorans (strain ATCC 35395 / DSM 2834 / JCM 12185 / C2A)).